The chain runs to 72 residues: Long neurotoxin OH-17 (72 aa).

Intrachain disulfides connect Cys-3–Cys-21, Cys-14–Cys-42, Cys-27–Cys-31, Cys-46–Cys-57, and Cys-58–Cys-63.

This sequence belongs to the three-finger toxin family. Long-chain subfamily. Type II alpha-neurotoxin sub-subfamily. In terms of tissue distribution, expressed by the venom gland.

The protein localises to the secreted. Functionally, binds with high affinity to muscular (alpha-1/CHRNA1) and neuronal (alpha-7/CHRNA7) nicotinic acetylcholine receptor (nAChR) and inhibits acetylcholine from binding to the receptor, thereby impairing neuromuscular and neuronal transmission. The protein is Long neurotoxin OH-17 of Ophiophagus hannah (King cobra).